Consider the following 279-residue polypeptide: Dermonecrotic toxin LspiSicTox-betaIE3ii (279 aa).

Residue His-5 is part of the active site. Positions 25 and 27 each coordinate Mg(2+). His-41 functions as the Nucleophile in the catalytic mechanism. 2 cysteine pairs are disulfide-bonded: Cys-45/Cys-51 and Cys-47/Cys-190. Asp-85 serves as a coordination point for Mg(2+).

Belongs to the arthropod phospholipase D family. Class II subfamily. Requires Mg(2+) as cofactor. In terms of tissue distribution, expressed by the venom gland.

The protein localises to the secreted. The catalysed reaction is an N-(acyl)-sphingosylphosphocholine = an N-(acyl)-sphingosyl-1,3-cyclic phosphate + choline. It carries out the reaction an N-(acyl)-sphingosylphosphoethanolamine = an N-(acyl)-sphingosyl-1,3-cyclic phosphate + ethanolamine. The enzyme catalyses a 1-acyl-sn-glycero-3-phosphocholine = a 1-acyl-sn-glycero-2,3-cyclic phosphate + choline. It catalyses the reaction a 1-acyl-sn-glycero-3-phosphoethanolamine = a 1-acyl-sn-glycero-2,3-cyclic phosphate + ethanolamine. Functionally, dermonecrotic toxins cleave the phosphodiester linkage between the phosphate and headgroup of certain phospholipids (sphingolipid and lysolipid substrates), forming an alcohol (often choline) and a cyclic phosphate. This toxin acts on sphingomyelin (SM). It may also act on ceramide phosphoethanolamine (CPE), lysophosphatidylcholine (LPC) and lysophosphatidylethanolamine (LPE), but not on lysophosphatidylserine (LPS), and lysophosphatidylglycerol (LPG). It acts by transphosphatidylation, releasing exclusively cyclic phosphate products as second products. Induces dermonecrosis, hemolysis, increased vascular permeability, edema, inflammatory response, and platelet aggregation. This Loxosceles spinulosa (Recluse spider) protein is Dermonecrotic toxin LspiSicTox-betaIE3ii.